The primary structure comprises 439 residues: Vacuolar zinc transporter COT1 (439 aa).

Topologically, residues 1–9 (MKLGSKQVK) are cytoplasmic. Residues 10-30 (IISLLLLDTVFFGIEITTGYL) form a helical membrane-spanning segment. Over 31–33 (SHS) the chain is Vacuolar. The chain crosses the membrane as a helical span at residues 34–54 (LALIADSFHMLNDIISLVVAL). Residues 55–76 (WAVNVAKNRNPDSTYTYGWKRA) are Cytoplasmic-facing. A helical transmembrane segment spans residues 77-97 (EILGALINAVFLIALCVSILI). Over 98–113 (EALQRIIAPPVIENPK) the chain is Vacuolar. A helical transmembrane segment spans residues 114 to 134 (FVLYVGVAGLISNTVGLFLFH). Residues 135 to 244 (DNDQEHGHGH…RKRSLNMHGV (110 aa)) lie on the Cytoplasmic side of the membrane. 3 short sequence motifs (histidine repeat) span residues 140 to 144 (HGHGH), 165 to 169 (HTHAH), and 219 to 223 (SSHTI). The span at 207–230 (PENASKTPSYSTSSHTIASGGNYT) shows a compositional bias: polar residues. Residues 207–231 (PENASKTPSYSTSSHTIASGGNYTE) form a disordered region. The residue at position 225 (serine 225) is a Phosphoserine. The chain crosses the membrane as a helical span at residues 245 to 265 (FLHVLGDALGNIGVMLSAFFI). Residues 266 to 274 (WKTDYSWKY) lie on the Vacuolar side of the membrane. Residues 275–295 (YTDPLVSLIITGIIFSSALPL) traverse the membrane as a helical segment. At 296-439 (SCKASKILLQ…CNTADCLEDH (144 aa)) the chain is on the cytoplasmic side. Residue lysine 301 forms a Glycyl lysine isopeptide (Lys-Gly) (interchain with G-Cter in ubiquitin) linkage. The segment covering 388-402 (TSTERAGDSQGDHLQ) has biased composition (basic and acidic residues). The disordered stretch occupies residues 388-408 (TSTERAGDSQGDHLQNDPLSL).

The protein belongs to the cation diffusion facilitator (CDF) transporter (TC 2.A.4) family. SLC30A subfamily.

The protein localises to the vacuole membrane. It catalyses the reaction Zn(2+)(in) = Zn(2+)(out). In terms of biological role, vacuolar transporter that regulates zinc homeostasis by mediating zinc transport and storage into the vacuole. Plays a role in resistance to zinc shock resulting from sudden influx of zinc into cytoplasm. May also participate in the regulation of cobalt levels under normal physiological conditions and may be important in the supply of metal that is required for metalloenzyme or cofactor synthesis. Involved in the resistance to cobalt and rhodium ions. The polypeptide is Vacuolar zinc transporter COT1 (Saccharomyces cerevisiae (strain ATCC 204508 / S288c) (Baker's yeast)).